The chain runs to 357 residues: MRPARALIDLQALRHNYRLAREATGARALAVIKADAYGHGAVRCAEALAAEADGFAVACIEEGLELREAGIRQPILLLEGFFEASELELIVAHDFWCVVHCAWQLEAIERASLARPLNVWLKMDSGMHRVGFFPEDFSAAHERLRASGKVAKIVMMSHFSRADELDCPRTEEQLAAFAAASQGLEGEISLRNSPAVLGWPKVPSDWVRPGILLYGATPFERAHPLADRLRPVMTLESKVISVRDLPAGEPVGYGARYSTERSQRIGVVAMGYADGYPRHAADGTLVFIDGKPGRLVGRVSMDMLTVDLTDHPQAGLGSRVELWGPNVPVGALAAQFGSIPYQLLCNLKRVPRVYSGA.

Residue Lys-33 is the Proton acceptor; specific for D-alanine of the active site. Position 33 is an N6-(pyridoxal phosphate)lysine (Lys-33). Lys-122 bears the N6-carboxylysine mark. Residue Arg-129 coordinates substrate. Tyr-253 serves as the catalytic Proton acceptor; specific for L-alanine. Met-301 serves as a coordination point for substrate.

Belongs to the alanine racemase family. As to quaternary structure, homodimer. Pyridoxal 5'-phosphate serves as cofactor.

The catalysed reaction is L-alanine = D-alanine. Its function is as follows. Isomerizes L-alanine to D-alanine which is then oxidized to pyruvate by DadA. In Pseudomonas aeruginosa (strain ATCC 15692 / DSM 22644 / CIP 104116 / JCM 14847 / LMG 12228 / 1C / PRS 101 / PAO1), this protein is Alanine racemase, catabolic.